The primary structure comprises 361 residues: Spermidine/putrescine import ATP-binding protein PotA (361 aa).

In terms of domain architecture, ABC transporter spans 7-241 (IEVRNVSKRY…PQHRFVAQFI (235 aa)). Residue 43 to 50 (GPSGCGKT) coordinates ATP.

This sequence belongs to the ABC transporter superfamily. Spermidine/putrescine importer (TC 3.A.1.11.1) family. In terms of assembly, the complex is composed of two ATP-binding proteins (PotA), two transmembrane proteins (PotB and PotC) and a solute-binding protein (PotD).

The protein resides in the cell inner membrane. It carries out the reaction ATP + H2O + polyamine-[polyamine-binding protein]Side 1 = ADP + phosphate + polyamineSide 2 + [polyamine-binding protein]Side 1.. Part of the ABC transporter complex PotABCD involved in spermidine/putrescine import. Responsible for energy coupling to the transport system. The chain is Spermidine/putrescine import ATP-binding protein PotA from Pseudomonas fluorescens (strain Pf0-1).